The primary structure comprises 231 residues: Probable caffeoyl-CoA O-methyltransferase 2 (231 aa).

Residues threonine 53, aspartate 75, 77 to 78, serine 83, aspartate 101, alanine 130, aspartate 152, aspartate 154, and tyrosine 161 contribute to the S-adenosyl-L-methionine site; that span reads GV. Residue aspartate 152 participates in a divalent metal cation binding. 2 residues coordinate a divalent metal cation: aspartate 178 and asparagine 179.

The protein belongs to the class I-like SAM-binding methyltransferase superfamily. Cation-dependent O-methyltransferase family. CCoAMT subfamily.

It catalyses the reaction (E)-caffeoyl-CoA + S-adenosyl-L-methionine = (E)-feruloyl-CoA + S-adenosyl-L-homocysteine + H(+). The protein is Probable caffeoyl-CoA O-methyltransferase 2 (omt6) of Dictyostelium discoideum (Social amoeba).